The sequence spans 248 residues: uncharacterized protein (248 aa).

Residues 7 to 246 form the ABC transporter domain; sequence VQLSNLSWTF…PASTILLPTS (240 aa). ATP is bound at residue 43 to 50; it reads GQSGSGKS.

This sequence belongs to the ABC transporter superfamily.

This is an uncharacterized protein from Mycobacterium tuberculosis (strain CDC 1551 / Oshkosh).